We begin with the raw amino-acid sequence, 274 residues long: Transcription factor Ovo-like 2 (274 aa).

Over residues 1–11 (MPKVFLVKRRS) the composition is skewed to basic residues. Residues 1–88 (MPKVFLVKRR…ETPELHDAQG (88 aa)) are disordered. Positions 18 to 29 (SWDELPDDKRAD) are enriched in basic and acidic residues. Over residues 50–74 (DGGSSSGCSSSAGEPGGAESSSSPR) the composition is skewed to low complexity. 4 consecutive C2H2-type zinc fingers follow at residues 118–140 (HNCD…LKCH), 146–168 (HLCT…VRTH), 174–197 (YKCE…KKIH), and 213–236 (YVCE…NSDH). Ser268 carries the phosphoserine modification.

It belongs to the krueppel C2H2-type zinc-finger protein family. As to quaternary structure, interacts (via zinc-finger domains) with CEBPA (via bZIP domain); the interaction inhibits the transcription factor activity of CEBPA and is required to repress adipogenesis. As to expression, expressed highly in testis, specifically in spermatocytes. Expressed also in skin and at lower levels in the ovary. Expressed in adipose tissues. Expression is lower than in testis and a relatively higher expression level is detected in the stromal vascular fraction (SVF) than in fat cells themselves.

It localises to the nucleus. In terms of biological role, zinc-finger transcription repressor factor. Plays a critical role in maintaining the identity of epithelial lineages by suppressing epithelial-to mesenchymal transition (EMT) mainly through the repression of ZEB1, an EMT inducer. Positively regulates neuronal differentiation. Suppresses cell cycling and terminal differentiation of keratinocytes by directly repressing MYC and NOTCH1. Important for the correct development of primordial germ cells in embryos. Plays dual functions in thermogenesis and adipogenesis to maintain energy balance. Essential for brown/beige adipose tissue-mediated thermogenesis, is necessary for the development of brown adipocytes. In white adipose tissues, limits adipogenesis by blocking CEBPA binding to its transcriptional targets and inhibiting its transcription factor activity. This Mus musculus (Mouse) protein is Transcription factor Ovo-like 2.